A 313-amino-acid chain; its full sequence is Transaldolase (313 aa).

The active-site Schiff-base intermediate with substrate is the Lys125.

Belongs to the transaldolase family. Type 1 subfamily. Homodimer.

The protein resides in the cytoplasm. The enzyme catalyses D-sedoheptulose 7-phosphate + D-glyceraldehyde 3-phosphate = D-erythrose 4-phosphate + beta-D-fructose 6-phosphate. It functions in the pathway carbohydrate degradation; pentose phosphate pathway; D-glyceraldehyde 3-phosphate and beta-D-fructose 6-phosphate from D-ribose 5-phosphate and D-xylulose 5-phosphate (non-oxidative stage): step 2/3. In terms of biological role, transaldolase is important for the balance of metabolites in the pentose-phosphate pathway. This Pseudomonas syringae pv. syringae (strain B728a) protein is Transaldolase.